Reading from the N-terminus, the 154-residue chain is Deoxyuridine 5'-triphosphate nucleotidohydrolase (154 aa).

Residues 68–70 (RSG), N81, and 85–87 (TID) contribute to the substrate site.

It belongs to the dUTPase family. Mg(2+) is required as a cofactor.

The enzyme catalyses dUTP + H2O = dUMP + diphosphate + H(+). It functions in the pathway pyrimidine metabolism; dUMP biosynthesis; dUMP from dCTP (dUTP route): step 2/2. This enzyme is involved in nucleotide metabolism: it produces dUMP, the immediate precursor of thymidine nucleotides and it decreases the intracellular concentration of dUTP so that uracil cannot be incorporated into DNA. This Acidiphilium cryptum (strain JF-5) protein is Deoxyuridine 5'-triphosphate nucleotidohydrolase.